Reading from the N-terminus, the 74-residue chain is ATP synthase subunit c (74 aa).

Helical transmembrane passes span 8 to 28 (FIGI…VSNI) and 52 to 72 (IGAG…MLLI).

This sequence belongs to the ATPase C chain family. As to quaternary structure, F-type ATPases have 2 components, F(1) - the catalytic core - and F(0) - the membrane proton channel. F(1) has five subunits: alpha(3), beta(3), gamma(1), delta(1), epsilon(1). F(0) has three main subunits: a(1), b(2) and c(10-14). The alpha and beta chains form an alternating ring which encloses part of the gamma chain. F(1) is attached to F(0) by a central stalk formed by the gamma and epsilon chains, while a peripheral stalk is formed by the delta and b chains.

The protein localises to the cell inner membrane. Its function is as follows. F(1)F(0) ATP synthase produces ATP from ADP in the presence of a proton or sodium gradient. F-type ATPases consist of two structural domains, F(1) containing the extramembraneous catalytic core and F(0) containing the membrane proton channel, linked together by a central stalk and a peripheral stalk. During catalysis, ATP synthesis in the catalytic domain of F(1) is coupled via a rotary mechanism of the central stalk subunits to proton translocation. Functionally, key component of the F(0) channel; it plays a direct role in translocation across the membrane. A homomeric c-ring of between 10-14 subunits forms the central stalk rotor element with the F(1) delta and epsilon subunits. The protein is ATP synthase subunit c of Rickettsia akari (strain Hartford).